Reading from the N-terminus, the 621-residue chain is Myosin-binding protein C, slow-type (621 aa).

Ig-like C2-type domains are found at residues 1–53 (EEIV…VDLR), 54–142 (PLKI…HVID), and 144–241 (PKII…LWIS). The residue at position 28 (Thr28) is a Phosphothreonine. Ser233 bears the Phosphoserine mark. 3 Fibronectin type-III domains span residues 244 to 343 (LRLA…TSPP), 344 to 459 (TLLA…IEPP), and 556 to 621 (PPQA…VIGN). A Phosphothreonine modification is found at Thr420. Tyr445 is modified (phosphotyrosine). In terms of domain architecture, Ig-like C2-type 4 spans 459–553 (PKIRIPRHLK…ASIDIQIVDR (95 aa)).

This sequence belongs to the immunoglobulin superfamily. MyBP family. In terms of assembly, interacts with USP25 (isoform USP25m only); the interaction prevents proteasomal degradation of MYBPC1.

Thick filament-associated protein located in the crossbridge region of vertebrate striated muscle a bands. Slow skeletal protein that binds to both myosin and actin. In vitro, binds to native thin filaments and modifies the activity of actin-activated myosin ATPase. May modulate muscle contraction or may play a more structural role. The polypeptide is Myosin-binding protein C, slow-type (Mybpc1) (Rattus norvegicus (Rat)).